Reading from the N-terminus, the 102-residue chain is Iron-sulfur cluster assembly protein CyaY (102 aa).

The protein belongs to the frataxin family.

Its function is as follows. Involved in iron-sulfur (Fe-S) cluster assembly. May act as a regulator of Fe-S biogenesis. This Pasteurella multocida (strain Pm70) protein is Iron-sulfur cluster assembly protein CyaY.